Reading from the N-terminus, the 545-residue chain is Membrane protein insertase YidC (545 aa).

A run of 6 helical transmembrane segments spans residues 10–30 (AVYL…FLFS), 319–339 (LLYF…NVIP), 341–361 (WGLS…PLTF), 407–427 (IGGC…YGLV), 467–487 (ILPF…SNVS), and 502–522 (MPIM…IYWI).

The protein belongs to the OXA1/ALB3/YidC family. Type 1 subfamily. As to quaternary structure, interacts with the Sec translocase complex via SecD. Specifically interacts with transmembrane segments of nascent integral membrane proteins during membrane integration.

The protein localises to the cell inner membrane. In terms of biological role, required for the insertion and/or proper folding and/or complex formation of integral membrane proteins into the membrane. Involved in integration of membrane proteins that insert both dependently and independently of the Sec translocase complex, as well as at least some lipoproteins. Aids folding of multispanning membrane proteins. This Borrelia recurrentis (strain A1) protein is Membrane protein insertase YidC.